The following is a 250-amino-acid chain: Flavin-dependent thymidylate synthase (250 aa).

In terms of domain architecture, ThyX spans 7–233; sequence LRVQLIAKTD…PAVFADFEVT (227 aa). Residues Ser-71, 95–97, and Gln-103 each bind FAD; that span reads RHR. DUMP is bound by residues 92–95, 103–107, and Arg-172; these read ELIR and QLSQR. Positions 95-105 match the ThyX motif motif; sequence RHRHFSYSQLS. FAD is bound by residues 188 to 190 and His-194; that span reads NYR. Arg-199 lines the dUMP pocket. Arg-199 (involved in ionization of N3 of dUMP, leading to its activation) is an active-site residue.

Belongs to the thymidylate synthase ThyX family. Homotetramer. It depends on FAD as a cofactor.

It catalyses the reaction dUMP + (6R)-5,10-methylene-5,6,7,8-tetrahydrofolate + NADPH + H(+) = dTMP + (6S)-5,6,7,8-tetrahydrofolate + NADP(+). Its pathway is pyrimidine metabolism; dTTP biosynthesis. Functionally, catalyzes the reductive methylation of 2'-deoxyuridine-5'-monophosphate (dUMP) to 2'-deoxythymidine-5'-monophosphate (dTMP) while utilizing 5,10-methylenetetrahydrofolate (mTHF) as the methyl donor, and NADPH and FADH(2) as the reductant. The protein is Flavin-dependent thymidylate synthase of Mycobacterium bovis (strain ATCC BAA-935 / AF2122/97).